We begin with the raw amino-acid sequence, 323 residues long: Serine/threonine-protein phosphatase PP1-gamma catalytic subunit (323 aa).

Ala2 carries the post-translational modification N-acetylalanine. Positions 64, 66, 92, and 124 each coordinate Mn(2+). The active-site Proton donor is His125. Mn(2+) contacts are provided by His173 and His248. The disordered stretch occupies residues 302-323 (KKPNATRPVTPPRGMITKQAKK). 2 positions are modified to phosphothreonine: Thr307 and Thr311.

This sequence belongs to the PPP phosphatase family. PP-1 subfamily. In terms of assembly, PP1 comprises a catalytic subunit, PPP1CA, PPP1CB or PPP1CC, which is folded into its native form by inhibitor 2 and glycogen synthetase kinase 3, and then complexed to one or several targeting or regulatory subunits. PPP1R12A, PPP1R12B and PPP1R12C mediate binding to myosin. PPP1R3A (in skeletal muscle), PPP1R3B (in sliver), PPP1R3C, PPP1R3D and PPP1R3F (in brain) mediate binding to glycogen. PPP1R15A and PPP1R15B mediate binding to EIF2S1. Part of a complex containing PPP1R15B, PP1 and NCK1/2. Interacts with PPP1R3B, PPP1R7 and CDCA2. Isoform 2 interacts with SPZ1. Interacts with IKFZ1; the interaction targets PPP1CC to pericentromeric heterochromatin, dephosphorylates IKAROS, stabilizes it and prevents it from degradation. Interacts with NOM1 and PPP1R8. Component of the PTW/PP1 phosphatase complex, composed of PPP1R10/PNUTS, TOX4, WDR82, and PPP1CA or PPP1CB or PPP1CC. Interacts with PPP1R8. Interacts with NEK2. Interacts with URI1; the interaction is phosphorylation-dependent and occurs in a growth factor-dependent manner. Interacts with FOXP3. Interacts with TMEM225 (via RVxF motif). Interacts with MKI67. Interacts with RRP1B; this targets PPP1CC to the nucleolus. Found in a complex with PPP1CA, PPP1CC, SHC1 and PEAK1. Interacts with DYNLT4. Interacts (via RVxF motif) with FIRRM; regulates PLK1 kinase activity. Interacts with the KNL1 complex subunit KNL1; the interaction is direct and mutually exclusive with KNL1 binding to microtubules. Component of the SHOC2-MRAS-PP1c (SMP) complex consisting of SHOC2, GTP-bound M-Ras/MRAS and the catalytic subunit of protein phosphatase 1 (either PPP1CA, PPP1CB or PPP1CC). SHOC2 and PP1c preferably bind M-Ras/MRAS, but they also bind K-Ras/KRAS, N-Ras/NRAS and H-Ras/HRAS; these interactions are GTP-dependent and both SHOC2 and PP1c are required to form a stable complex. Interacts with SHOC2 in the absence of Ras GTPases. Requires Mn(2+) as cofactor. Post-translationally, phosphorylated by NEK2. Isoform 2 is expressed only in testis, in the late spermatocytes and early spematids (at protein level).

Its subcellular location is the cytoplasm. It localises to the nucleus. It is found in the cleavage furrow. The protein localises to the nucleolus. The protein resides in the nucleoplasm. Its subcellular location is the chromosome. It localises to the centromere. It is found in the kinetochore. The protein localises to the nucleus speckle. The protein resides in the midbody. Its subcellular location is the mitochondrion. It localises to the cytoskeleton. It is found in the microtubule organizing center. The catalysed reaction is O-phospho-L-seryl-[protein] + H2O = L-seryl-[protein] + phosphate. It catalyses the reaction O-phospho-L-threonyl-[protein] + H2O = L-threonyl-[protein] + phosphate. Its activity is regulated as follows. Inactivated by binding to URI1. In terms of biological role, protein phosphatase that associates with over 200 regulatory proteins to form highly specific holoenzymes which dephosphorylate hundreds of biological targets. Protein phosphatase 1 (PP1) is essential for cell division, and participates in the regulation of glycogen metabolism, muscle contractility and protein synthesis. Dephosphorylates RPS6KB1. Involved in regulation of ionic conductances and long-term synaptic plasticity. May play an important role in dephosphorylating substrates such as the postsynaptic density-associated Ca(2+)/calmodulin dependent protein kinase II. Component of the PTW/PP1 phosphatase complex, which plays a role in the control of chromatin structure and cell cycle progression during the transition from mitosis into interphase. In balance with CSNK1D and CSNK1E, determines the circadian period length, through the regulation of the speed and rhythmicity of PER1 and PER2 phosphorylation. May dephosphorylate CSNK1D and CSNK1E. Regulates the recruitment of the SKA complex to kinetochores. Core component of the SHOC2-MRAS-PP1c (SMP) holophosphatase complex that regulates the MAPK pathway activation. Dephosphorylates MKI67 at the onset of anaphase. The SMP complex specifically dephosphorylates the inhibitory phosphorylation at 'Ser-259' of RAF1 kinase, 'Ser-365' of BRAF kinase and 'Ser-214' of ARAF kinase, stimulating their kinase activities. The SMP complex enhances the dephosphorylation activity and substrate specificity of PP1c. Required for normal male fertility. The protein is Serine/threonine-protein phosphatase PP1-gamma catalytic subunit (Ppp1cc) of Rattus norvegicus (Rat).